A 533-amino-acid chain; its full sequence is L-aspartate oxidase (533 aa).

FAD contacts are provided by residues 16–19 (SGAA), Lys-38, 45–52 (ATFYAQGG), and Asp-223. Arg-290 (proton donor/acceptor) is an active-site residue. FAD is bound by residues Glu-375 and 391 to 392 (SL).

This sequence belongs to the FAD-dependent oxidoreductase 2 family. NadB subfamily. Requires FAD as cofactor.

The protein resides in the cytoplasm. It carries out the reaction L-aspartate + O2 = iminosuccinate + H2O2. It participates in cofactor biosynthesis; NAD(+) biosynthesis; iminoaspartate from L-aspartate (oxidase route): step 1/1. Functionally, catalyzes the oxidation of L-aspartate to iminoaspartate, the first step in the de novo biosynthesis of NAD(+). The protein is L-aspartate oxidase (nadB) of Yersinia pestis.